We begin with the raw amino-acid sequence, 1030 residues long: Halotolerance protein 9 (1030 aa).

The segment at residues 136-166 (CDHCRKRKIRCDEVDQQTKKCSNCIKFQLPC) is a DNA-binding region (zn(2)-C6 fungal-type). The segment at 185–208 (HHATPGESLQTSNSISNPVASSSV) is disordered. Low complexity predominate over residues 196–208 (SNSISNPVASSSV). 2 positions are modified to phosphoserine: Ser-221 and Ser-937.

The protein resides in the cytoplasm. It localises to the nucleus. Its function is as follows. Putative transcription factor involved in halotolerance. The protein is Halotolerance protein 9 (HAL9) of Saccharomyces cerevisiae (strain ATCC 204508 / S288c) (Baker's yeast).